The chain runs to 453 residues: Bifunctional protein GlmU (453 aa).

The tract at residues 1 to 226 (MSLNVVILAA…AMEVEGANNR (226 aa)) is pyrophosphorylase. Residues 8 to 11 (LAAG), K22, Q73, 78 to 79 (GT), 100 to 102 (YGD), G137, E151, N166, and N224 contribute to the UDP-N-acetyl-alpha-D-glucosamine site. D102 contributes to the Mg(2+) binding site. N224 serves as a coordination point for Mg(2+). Residues 227–247 (VQLAQLERSYQKMQAERLMIA) form a linker region. The segment at 248 to 453 (GATLIDPARF…QNWARPVKKK (206 aa)) is N-acetyltransferase. The UDP-N-acetyl-alpha-D-glucosamine site is built by R330 and K348. Catalysis depends on H360, which acts as the Proton acceptor. UDP-N-acetyl-alpha-D-glucosamine-binding residues include Y363 and N374. Acetyl-CoA is bound by residues A377, 383–384 (NY), S402, A420, and R437.

In the N-terminal section; belongs to the N-acetylglucosamine-1-phosphate uridyltransferase family. It in the C-terminal section; belongs to the transferase hexapeptide repeat family. Homotrimer. The cofactor is Mg(2+).

The protein localises to the cytoplasm. The catalysed reaction is alpha-D-glucosamine 1-phosphate + acetyl-CoA = N-acetyl-alpha-D-glucosamine 1-phosphate + CoA + H(+). The enzyme catalyses N-acetyl-alpha-D-glucosamine 1-phosphate + UTP + H(+) = UDP-N-acetyl-alpha-D-glucosamine + diphosphate. The protein operates within nucleotide-sugar biosynthesis; UDP-N-acetyl-alpha-D-glucosamine biosynthesis; N-acetyl-alpha-D-glucosamine 1-phosphate from alpha-D-glucosamine 6-phosphate (route II): step 2/2. Its pathway is nucleotide-sugar biosynthesis; UDP-N-acetyl-alpha-D-glucosamine biosynthesis; UDP-N-acetyl-alpha-D-glucosamine from N-acetyl-alpha-D-glucosamine 1-phosphate: step 1/1. It functions in the pathway bacterial outer membrane biogenesis; LPS lipid A biosynthesis. In terms of biological role, catalyzes the last two sequential reactions in the de novo biosynthetic pathway for UDP-N-acetylglucosamine (UDP-GlcNAc). The C-terminal domain catalyzes the transfer of acetyl group from acetyl coenzyme A to glucosamine-1-phosphate (GlcN-1-P) to produce N-acetylglucosamine-1-phosphate (GlcNAc-1-P), which is converted into UDP-GlcNAc by the transfer of uridine 5-monophosphate (from uridine 5-triphosphate), a reaction catalyzed by the N-terminal domain. The polypeptide is Bifunctional protein GlmU (Aeromonas hydrophila subsp. hydrophila (strain ATCC 7966 / DSM 30187 / BCRC 13018 / CCUG 14551 / JCM 1027 / KCTC 2358 / NCIMB 9240 / NCTC 8049)).